The primary structure comprises 431 residues: Tyrosine--tRNA ligase (431 aa).

Tyrosine 34 contacts L-tyrosine. The 'HIGH' region signature appears at 39–48 (PTADSLHIGH). L-tyrosine contacts are provided by tyrosine 171 and glutamine 175. Residues 231–235 (KFGKT) carry the 'KMSKS' region motif. Lysine 234 provides a ligand contact to ATP. Residues 353-422 (INVVEALVKT…GKYTILRRGK (70 aa)) form the S4 RNA-binding domain.

Belongs to the class-I aminoacyl-tRNA synthetase family. TyrS type 1 subfamily. In terms of assembly, homodimer.

It is found in the cytoplasm. The catalysed reaction is tRNA(Tyr) + L-tyrosine + ATP = L-tyrosyl-tRNA(Tyr) + AMP + diphosphate + H(+). In terms of biological role, catalyzes the attachment of tyrosine to tRNA(Tyr) in a two-step reaction: tyrosine is first activated by ATP to form Tyr-AMP and then transferred to the acceptor end of tRNA(Tyr). This Neisseria meningitidis serogroup C / serotype 2a (strain ATCC 700532 / DSM 15464 / FAM18) protein is Tyrosine--tRNA ligase.